Consider the following 268-residue polypeptide: Putative carbamate hydrolase RutD (268 aa).

In terms of domain architecture, AB hydrolase-1 spans 15-119 (PVMVMIAGLG…VIVNGWLSLS (105 aa)).

This sequence belongs to the AB hydrolase superfamily. Hydrolase RutD family.

The catalysed reaction is carbamate + 2 H(+) = NH4(+) + CO2. In terms of biological role, involved in pyrimidine catabolism. May facilitate the hydrolysis of carbamate, a reaction that can also occur spontaneously. The sequence is that of Putative carbamate hydrolase RutD from Cronobacter sakazakii (strain ATCC BAA-894) (Enterobacter sakazakii).